Consider the following 158-residue polypeptide: Transcription elongation factor GreA (158 aa).

It belongs to the GreA/GreB family.

In terms of biological role, necessary for efficient RNA polymerase transcription elongation past template-encoded arresting sites. The arresting sites in DNA have the property of trapping a certain fraction of elongating RNA polymerases that pass through, resulting in locked ternary complexes. Cleavage of the nascent transcript by cleavage factors such as GreA or GreB allows the resumption of elongation from the new 3'terminus. GreA releases sequences of 2 to 3 nucleotides. The protein is Transcription elongation factor GreA of Bacillus licheniformis (strain ATCC 14580 / DSM 13 / JCM 2505 / CCUG 7422 / NBRC 12200 / NCIMB 9375 / NCTC 10341 / NRRL NRS-1264 / Gibson 46).